A 202-amino-acid chain; its full sequence is Dephospho-CoA kinase (202 aa).

Residues 4-201 form the DPCK domain; the sequence is VIGLTGGIAS…QKYLAMSKQN (198 aa). Residue 12–17 coordinates ATP; sequence ASGKTT.

Belongs to the CoaE family.

It is found in the cytoplasm. The catalysed reaction is 3'-dephospho-CoA + ATP = ADP + CoA + H(+). It functions in the pathway cofactor biosynthesis; coenzyme A biosynthesis; CoA from (R)-pantothenate: step 5/5. Its function is as follows. Catalyzes the phosphorylation of the 3'-hydroxyl group of dephosphocoenzyme A to form coenzyme A. In Vibrio vulnificus (strain CMCP6), this protein is Dephospho-CoA kinase.